Consider the following 490-residue polypeptide: ATP synthase subunit beta, chloroplastic (490 aa).

170 to 177 (GGAGVGKT) is an ATP binding site.

It belongs to the ATPase alpha/beta chains family. F-type ATPases have 2 components, CF(1) - the catalytic core - and CF(0) - the membrane proton channel. CF(1) has five subunits: alpha(3), beta(3), gamma(1), delta(1), epsilon(1). CF(0) has four main subunits: a(1), b(1), b'(1) and c(9-12).

The protein localises to the plastid. The protein resides in the chloroplast thylakoid membrane. It catalyses the reaction ATP + H2O + 4 H(+)(in) = ADP + phosphate + 5 H(+)(out). Functionally, produces ATP from ADP in the presence of a proton gradient across the membrane. The catalytic sites are hosted primarily by the beta subunits. This is ATP synthase subunit beta, chloroplastic from Cressa truxillensis (Spreading alkaliweed).